The sequence spans 368 residues: Molybdenum import ATP-binding protein ModC (368 aa).

The region spanning Met1–Ser230 is the ABC transporter domain. Residue Gly32 to Thr39 participates in ATP binding. In terms of domain architecture, Mop spans Ala291–Asp362.

The protein belongs to the ABC transporter superfamily. Molybdate importer (TC 3.A.1.8) family. As to quaternary structure, the complex is composed of two ATP-binding proteins (ModC), two transmembrane proteins (ModB) and a solute-binding protein (ModA).

Its subcellular location is the cell inner membrane. The enzyme catalyses molybdate(out) + ATP + H2O = molybdate(in) + ADP + phosphate + H(+). Its function is as follows. Part of the ABC transporter complex ModABC involved in molybdenum import. Responsible for energy coupling to the transport system. This Vibrio parahaemolyticus serotype O3:K6 (strain RIMD 2210633) protein is Molybdenum import ATP-binding protein ModC.